The following is a 158-amino-acid chain: MQGRLSVWLVKHGLVHRSLGFDYQGIETLQIKPEDWHSIAVILYVYGYNYLRSQCAYDVAPGGLLASVYHLTRIEYGVDQPEEVCIKVFAPRSNPRIPSVFWVWKSSDFQERESYDMLGISYENHPRLKRILMPESWIGWPLRKDYIAPNFYEIQDAH.

The protein belongs to the complex I 30 kDa subunit family. NDH is composed of at least 16 different subunits, 5 of which are encoded in the nucleus.

It is found in the plastid. The protein resides in the chloroplast thylakoid membrane. It catalyses the reaction a plastoquinone + NADH + (n+1) H(+)(in) = a plastoquinol + NAD(+) + n H(+)(out). It carries out the reaction a plastoquinone + NADPH + (n+1) H(+)(in) = a plastoquinol + NADP(+) + n H(+)(out). Functionally, NDH shuttles electrons from NAD(P)H:plastoquinone, via FMN and iron-sulfur (Fe-S) centers, to quinones in the photosynthetic chain and possibly in a chloroplast respiratory chain. The immediate electron acceptor for the enzyme in this species is believed to be plastoquinone. Couples the redox reaction to proton translocation, and thus conserves the redox energy in a proton gradient. This chain is NAD(P)H-quinone oxidoreductase subunit J, chloroplastic, found in Gossypium barbadense (Sea Island cotton).